Consider the following 421-residue polypeptide: Histidine--tRNA ligase (421 aa).

This sequence belongs to the class-II aminoacyl-tRNA synthetase family. In terms of assembly, homodimer.

The protein localises to the cytoplasm. The enzyme catalyses tRNA(His) + L-histidine + ATP = L-histidyl-tRNA(His) + AMP + diphosphate + H(+). This chain is Histidine--tRNA ligase, found in Francisella tularensis subsp. holarctica (strain OSU18).